The chain runs to 206 residues: Large ribosomal subunit protein uL4 (206 aa).

It belongs to the universal ribosomal protein uL4 family. Part of the 50S ribosomal subunit.

Its function is as follows. One of the primary rRNA binding proteins, this protein initially binds near the 5'-end of the 23S rRNA. It is important during the early stages of 50S assembly. It makes multiple contacts with different domains of the 23S rRNA in the assembled 50S subunit and ribosome. Forms part of the polypeptide exit tunnel. This Jannaschia sp. (strain CCS1) protein is Large ribosomal subunit protein uL4.